The primary structure comprises 217 residues: MPITKATPLFLRYRLKGFVFLTLLLVQGVFTACAPAVPVNNKSVSAVQPEDKQALKPDPALGEYTSDLKFNTNFIPKKDDPFRPFYDLSFTLQFQDPYTATYGTGWLIDWKDNNQPNKFTAYIATNLHVADNLRNVNDYEFFNQFDYFDDPTESFTLGKFVDGNEIKQIVPDAMHEPSLVRIETSKLPKTAYTTTLFINDLGEYRLPAADFAVLESI.

The signal sequence occupies residues 1 to 32 (MPITKATPLFLRYRLKGFVFLTLLLVQGVFTA). A lipid anchor (N-palmitoyl cysteine) is attached at cysteine 33. The S-diacylglycerol cysteine moiety is linked to residue cysteine 33.

Belongs to the MG067/MG068/MG395 family.

The protein localises to the cell membrane. This is an uncharacterized protein from Mycoplasma pneumoniae (strain ATCC 29342 / M129 / Subtype 1) (Mycoplasmoides pneumoniae).